The primary structure comprises 277 residues: Large ribosomal subunit protein uL2 (277 aa).

A disordered region spans residues glycine 222–lysine 277.

The protein belongs to the universal ribosomal protein uL2 family. As to quaternary structure, part of the 50S ribosomal subunit. Forms a bridge to the 30S subunit in the 70S ribosome.

Its function is as follows. One of the primary rRNA binding proteins. Required for association of the 30S and 50S subunits to form the 70S ribosome, for tRNA binding and peptide bond formation. It has been suggested to have peptidyltransferase activity; this is somewhat controversial. Makes several contacts with the 16S rRNA in the 70S ribosome. The protein is Large ribosomal subunit protein uL2 of Streptococcus agalactiae serotype Ia (strain ATCC 27591 / A909 / CDC SS700).